The sequence spans 183 residues: Peptidyl-tRNA hydrolase (183 aa).

Tyr15 is a tRNA binding site. His20 (proton acceptor) is an active-site residue. Residues Tyr67 and Asn69 each coordinate tRNA.

Belongs to the PTH family. Monomer.

It localises to the cytoplasm. The enzyme catalyses an N-acyl-L-alpha-aminoacyl-tRNA + H2O = an N-acyl-L-amino acid + a tRNA + H(+). Its function is as follows. Hydrolyzes ribosome-free peptidyl-tRNAs (with 1 or more amino acids incorporated), which drop off the ribosome during protein synthesis, or as a result of ribosome stalling. In terms of biological role, catalyzes the release of premature peptidyl moieties from peptidyl-tRNA molecules trapped in stalled 50S ribosomal subunits, and thus maintains levels of free tRNAs and 50S ribosomes. The sequence is that of Peptidyl-tRNA hydrolase from Chlamydia abortus (strain DSM 27085 / S26/3) (Chlamydophila abortus).